Reading from the N-terminus, the 300-residue chain is uncharacterized protein (300 aa).

Y53 functions as the Proton donor in the catalytic mechanism. Position 210–220 (S210–E220) interacts with NADP(+).

The protein belongs to the aldo/keto reductase family. Aldo/keto reductase 2 subfamily.

This is an uncharacterized protein from Bacillus subtilis (strain 168).